The chain runs to 161 residues: Probable chemoreceptor glutamine deamidase CheD (161 aa).

The protein belongs to the CheD family.

It carries out the reaction L-glutaminyl-[protein] + H2O = L-glutamyl-[protein] + NH4(+). Its function is as follows. Probably deamidates glutamine residues to glutamate on methyl-accepting chemotaxis receptors (MCPs), playing an important role in chemotaxis. This Lachnoclostridium phytofermentans (strain ATCC 700394 / DSM 18823 / ISDg) (Clostridium phytofermentans) protein is Probable chemoreceptor glutamine deamidase CheD.